Consider the following 255-residue polypeptide: Ciliogenesis and planar polarity effector 2 (255 aa).

The tract at residues 52-255 (PADIASYKLF…VIAGLVGGAD (204 aa)) is small GTPase-like. GTP is bound by residues 64–71 (GRSGAGKT) and 177–180 (TKLD).

It belongs to the small GTPase superfamily. Rab family.

It is found in the cytoplasm. It localises to the cytoskeleton. The protein localises to the cilium basal body. Its function is as follows. Potential effector of the planar cell polarity signaling pathway. Plays a role in targeted membrane trafficking most probably at the level of vesicle fusion with membranes. Involved in cilium biogenesis by regulating the transport of cargo proteins to the basal body and to the apical tips of cilia. More generally involved in exocytosis in secretory cells. This chain is Ciliogenesis and planar polarity effector 2 (cplane2), found in Xenopus tropicalis (Western clawed frog).